A 517-amino-acid polypeptide reads, in one-letter code: Glycerol kinase (517 aa).

Residue Thr24 participates in ADP binding. Residues Thr24, Thr25, and Ser26 each contribute to the ATP site. Thr24 contributes to the sn-glycerol 3-phosphate binding site. Arg28 is a binding site for ADP. Residues Arg94, Glu95, Tyr146, and Asp261 each contribute to the sn-glycerol 3-phosphate site. 5 residues coordinate glycerol: Arg94, Glu95, Tyr146, Asp261, and Gln262. ADP is bound by residues Thr283 and Gly327. The ATP site is built by Thr283, Gly327, Gln331, and Gly428. ADP is bound by residues Gly428 and Asn432.

The protein belongs to the FGGY kinase family.

The catalysed reaction is glycerol + ATP = sn-glycerol 3-phosphate + ADP + H(+). It functions in the pathway polyol metabolism; glycerol degradation via glycerol kinase pathway; sn-glycerol 3-phosphate from glycerol: step 1/1. With respect to regulation, inhibited by fructose 1,6-bisphosphate (FBP). Key enzyme in the regulation of glycerol uptake and metabolism. Catalyzes the phosphorylation of glycerol to yield sn-glycerol 3-phosphate. In Mycobacterium tuberculosis (strain ATCC 25177 / H37Ra), this protein is Glycerol kinase.